The primary structure comprises 112 residues: EGDAAAGEKVSKKCLACHTFDQGGANKVGPNLFGVFENTAAHKDNYAYSESYTEMKAKGLTWTEANLAAYVKNPKAFVLEKSGDPKAKSKMTFKLTKDDEIENVIAYLKTLK.

Positions 14, 17, 18, and 91 each coordinate heme c.

Belongs to the cytochrome c family. Post-translationally, binds 1 heme c group covalently per subunit.

Functionally, cytochrome c2 is found mainly in purple, non-sulfur, photosynthetic bacteria where it functions as the electron donor to the oxidized bacteriochlorophyll in the photophosphorylation pathway. However, it may also have a role in the respiratory chain and is found in some non-photosynthetic bacteria. The polypeptide is Cytochrome c2 (cycA) (Rhodospirillum rubrum).